The primary structure comprises 159 residues: Transmembrane protein 92 (159 aa).

Positions 1–26 (MSQAWVPGLAPTLLFSLLAGPQKIAA) are cleaved as a signal peptide. Residues 27–57 (KCGLILACPKGFKCCGDSCCQENELFPGPVR) lie on the Extracellular side of the membrane. A helical transmembrane segment spans residues 58-78 (IFVIIFLVILSVFCICGLAKC). The Cytoplasmic segment spans residues 79–159 (FCRNCREPEP…DQRGIDNPAF (81 aa)). Residues 122–159 (EVILKPSLGPTPTEPPPPYSFRPEEYTGDQRGIDNPAF) are disordered.

It localises to the membrane. The polypeptide is Transmembrane protein 92 (TMEM92) (Homo sapiens (Human)).